The chain runs to 99 residues: Small ribosomal subunit protein bS20 (99 aa).

Belongs to the bacterial ribosomal protein bS20 family.

Its function is as follows. Binds directly to 16S ribosomal RNA. In Caldicellulosiruptor bescii (strain ATCC BAA-1888 / DSM 6725 / KCTC 15123 / Z-1320) (Anaerocellum thermophilum), this protein is Small ribosomal subunit protein bS20.